A 334-amino-acid polypeptide reads, in one-letter code: Syntaxin-18 (334 aa).

Residues 1–308 lie on the Cytoplasmic side of the membrane; that stretch reads MAVDITLLFR…EDIREAIKNN (308 aa). 2 disordered regions span residues 29-50 and 166-225; these read GGAD…GDFS and LSKL…GEDE. Basic and acidic residues-rich tracts occupy residues 33–50, 166–186, and 193–207; these read GSRD…GDFS, LSKL…EKSS, and SEEK…EKPL. The t-SNARE coiled-coil homology domain maps to 242-304; that stretch reads IGEMNSLFDE…KEGNEDIREA (63 aa). A helical; Anchor for type IV membrane protein transmembrane segment spans residues 309 to 329; it reads AGFRVWILFFLVMCSFSLLFL. The Vesicular segment spans residues 330–334; it reads DWYDS.

This sequence belongs to the syntaxin family. As to quaternary structure, component of a SNARE complex consisting of STX18, USE1L, BNIP1/SEC20L, and SEC22B. RINT1/TIP20L and ZW10 are associated with the complex through interaction with BNIP1/SEC20L. Interacts directly with USE1L and BNIP1/SEC20L.

It localises to the endoplasmic reticulum membrane. The protein resides in the golgi apparatus membrane. Functionally, syntaxin that may be involved in targeting and fusion of Golgi-derived retrograde transport vesicles with the ER. The sequence is that of Syntaxin-18 (Stx18) from Rattus norvegicus (Rat).